A 397-amino-acid polypeptide reads, in one-letter code: Acetate kinase (397 aa).

A Mg(2+)-binding site is contributed by asparagine 8. Lysine 15 provides a ligand contact to ATP. Residue arginine 89 participates in substrate binding. The Proton donor/acceptor role is filled by aspartate 146. ATP contacts are provided by residues histidine 206 to glycine 210, aspartate 281 to arginine 283, and glycine 329 to asparagine 333. A Mg(2+)-binding site is contributed by glutamate 382.

Belongs to the acetokinase family. Homodimer. Requires Mg(2+) as cofactor. Mn(2+) is required as a cofactor.

Its subcellular location is the cytoplasm. It carries out the reaction acetate + ATP = acetyl phosphate + ADP. It participates in metabolic intermediate biosynthesis; acetyl-CoA biosynthesis; acetyl-CoA from acetate: step 1/2. Functionally, catalyzes the formation of acetyl phosphate from acetate and ATP. Can also catalyze the reverse reaction. This is Acetate kinase from Bacillus mycoides (strain KBAB4) (Bacillus weihenstephanensis).